The chain runs to 91 residues: Small ribosomal subunit protein uS19 (91 aa).

It belongs to the universal ribosomal protein uS19 family.

Functionally, protein S19 forms a complex with S13 that binds strongly to the 16S ribosomal RNA. The chain is Small ribosomal subunit protein uS19 from Prochlorococcus marinus (strain MIT 9211).